A 297-amino-acid chain; its full sequence is T-cell leukemia homeobox protein 3 (297 aa).

The segment at 1–68 (MEPAAGAQGP…LGGPRGGAPY (68 aa)) is disordered. Over residues 32-52 (APPPPPPPPPPPPPPPPPPRG) the composition is skewed to pro residues. The homeobox DNA-binding region spans 172 to 231 (RKKPRTSFSRVQICELEKRFHRQKYLASAERAALAKSLKMTDAQVKTWFQNRRTKWRRQT).

As to expression, expression is restricted to neurons in the peripheral and central nervous system.

The protein localises to the nucleus. Functionally, seems to be involved in the development of cranial sensory innervation from peripheral ganglia. This Gallus gallus (Chicken) protein is T-cell leukemia homeobox protein 3 (TLX3).